The primary structure comprises 523 residues: Calcium-dependent protein kinase 28 (523 aa).

The N-myristoyl glycine moiety is linked to residue G2. C4 is lipidated: S-palmitoyl cysteine. The tract at residues 15–43 is disordered; the sequence is SSRRSSQTKSKAAPTPIDTKASTKRRTGS. Residues 62–322 form the Protein kinase domain; it reads YTIGKLLGHG…AAQALSHAWV (261 aa). ATP contacts are provided by residues 68–76 and K91; that span reads LGHGQFGYT. The active-site Proton acceptor is the D188. S228 and S318 each carry phosphoserine. The interval 328–358 is autoinhibitory domain; sequence ATDIPVDISVLNNLRQFVRYSRLKQFALRAL. 4 EF-hand domains span residues 365–400, 402–437, 444–479, and 482–509; these read AEIS…DLPW, LKDS…VHQL, KWQL…RGSI, and LLDE…ASIS. Residues D378, D380, N382, E389, D415, N417, D419, E426, D457, D459, D461, Y463, E468, D487, D489, D491, and K493 each coordinate Ca(2+). S495 carries the phosphoserine modification. Position 498 (E498) interacts with Ca(2+). S515 carries the post-translational modification Phosphoserine.

It belongs to the protein kinase superfamily. Ser/Thr protein kinase family. CDPK subfamily. As to quaternary structure, interacts with BIK1. Expressed in vascular and meristematic tissues throughout plant development.

The protein localises to the cell membrane. It catalyses the reaction L-seryl-[protein] + ATP = O-phospho-L-seryl-[protein] + ADP + H(+). The enzyme catalyses L-threonyl-[protein] + ATP = O-phospho-L-threonyl-[protein] + ADP + H(+). Activated by calcium. Autophosphorylation plays an important role in the regulation of the kinase activity. Functionally, may play a role in signal transduction pathways that involve calcium as a second messenger. Acts as a developmentally controlled regulator for coordinated stem elongation and vascular development. Acts as a key component which contributes to the developmental switch that establishes the transition from vegetative to reproductive growth. Involved in pathogen-associated molecular pattern (PAMP)-triggered immunity (PTI) signaling. Interacts with and phosphorylates the kinase BIK1, a central rate-limiting kinase in PTI signaling. Facilitates BIK1 turnover and negatively regulates BIK1-mediated immune responses triggered by several PAMPs. Its kinase activity is necessary and sufficient for its function in PTI signaling. This Arabidopsis thaliana (Mouse-ear cress) protein is Calcium-dependent protein kinase 28.